The following is an 806-amino-acid chain: Leucine--tRNA ligase (806 aa).

The short motif at 38-48 (PYPSGEIHMGH) is the 'HIGH' region element. The short motif at 572–576 (KMSKS) is the 'KMSKS' region element. Position 575 (K575) interacts with ATP.

This sequence belongs to the class-I aminoacyl-tRNA synthetase family.

It localises to the cytoplasm. It carries out the reaction tRNA(Leu) + L-leucine + ATP = L-leucyl-tRNA(Leu) + AMP + diphosphate. The protein is Leucine--tRNA ligase of Helicobacter pylori (strain J99 / ATCC 700824) (Campylobacter pylori J99).